The sequence spans 134 residues: Large ribosomal subunit protein bL20 (134 aa).

It belongs to the bacterial ribosomal protein bL20 family.

Binds directly to 23S ribosomal RNA and is necessary for the in vitro assembly process of the 50S ribosomal subunit. It is not involved in the protein synthesizing functions of that subunit. The chain is Large ribosomal subunit protein bL20 from Sinorhizobium medicae (strain WSM419) (Ensifer medicae).